An 856-amino-acid polypeptide reads, in one-letter code: Envelope glycoprotein gp150 (856 aa).

Over 1 to 785 (MAEGFAANRQ…WIGNIPQYLK (785 aa)) the chain is Extracellular. Asn-220, Asn-258, Asn-269, Asn-274, Asn-298, Asn-330, Asn-336, Asn-342, Asn-418, Asn-422, Asn-448, Asn-481, Asn-499, Asn-518, Asn-531, Asn-548, and Asn-551 each carry an N-linked (GlcNAc...) asparagine; by host glycan. A fusion peptide region spans residues 616-636 (VMLALATVLSIAGAGTGATAI). The stretch at 643 to 693 (HQVLATHQEAIEKVTGALKINNLRLVTLEHQVLVIGLKVEAMEKFLYTAFA) forms a coiled coil. Positions 662–680 (INNLRLVTLEHQVLVIGLK) are immunosuppression. N-linked (GlcNAc...) asparagine; by host glycans are attached at residues Asn-717, Asn-721, Asn-729, and Asn-737. Positions 736 to 772 (YNQTKDLQQKFYEIIMDIEQNNVQGKTGIQQLQKWED) form a coiled coil. A helical membrane pass occupies residues 786 to 806 (GLLGGILGIGLGVLLLILCLP). Topologically, residues 807 to 856 (TLVDCIRNCIHKILGYTVIAMPEVEGEEIQPQMELRRNGRQCGMSEKEEE) are cytoplasmic.

In terms of assembly, the mature envelope protein (Env) consists of a trimer of SU-TM heterodimers attached by noncovalent interactions or by a labile interchain disulfide bond. In terms of processing, specific enzymatic cleavages in vivo yield mature proteins. Envelope glycoproteins are synthesized as an inactive precursor that is N-glycosylated and processed likely by host cell furin or by a furin-like protease in the Golgi to yield the mature SU and TM proteins. The cleavage site between SU and TM requires the minimal sequence [KR]-X-[KR]-R.

Its subcellular location is the virion membrane. It is found in the host cell membrane. Functionally, the surface protein (SU) attaches the virus to the host cell by binding to its receptor. This interaction triggers the refolding of the transmembrane protein (TM) and is thought to activate its fusogenic potential by unmasking its fusion peptide. Fusion occurs at the host cell plasma membrane. In terms of biological role, the transmembrane protein (TM) acts as a class I viral fusion protein. Under the current model, the protein has at least 3 conformational states: pre-fusion native state, pre-hairpin intermediate state, and post-fusion hairpin state. During viral and target cell membrane fusion, the coiled coil regions (heptad repeats) assume a trimer-of-hairpins structure, positioning the fusion peptide in close proximity to the C-terminal region of the ectodomain. The formation of this structure appears to drive apposition and subsequent fusion of viral and target cell membranes. Membranes fusion leads to delivery of the nucleocapsid into the cytoplasm. The polypeptide is Envelope glycoprotein gp150 (env) (Felidae (cat family)).